The primary structure comprises 403 residues: Coenzyme A biosynthesis bifunctional protein CoaBC (403 aa).

The interval 1-197 (MISEIMHPTK…GNNLKKEGNR (197 aa)) is phosphopantothenoylcysteine decarboxylase. A phosphopantothenate--cysteine ligase region spans residues 198–403 (VLILNGGTVE…VEKVKKLVKS (206 aa)). CTP-binding residues include Asp285, Lys294, and Phe327.

In the N-terminal section; belongs to the HFCD (homo-oligomeric flavin containing Cys decarboxylase) superfamily. The protein in the C-terminal section; belongs to the PPC synthetase family. In terms of assembly, homododecamer. The CoaC domain is responsible for dodecamer formation. Mg(2+) serves as cofactor. FMN is required as a cofactor.

The catalysed reaction is N-[(R)-4-phosphopantothenoyl]-L-cysteine + H(+) = (R)-4'-phosphopantetheine + CO2. It carries out the reaction (R)-4'-phosphopantothenate + L-cysteine + CTP = N-[(R)-4-phosphopantothenoyl]-L-cysteine + CMP + diphosphate + H(+). It functions in the pathway cofactor biosynthesis; coenzyme A biosynthesis. Functionally, catalyzes two sequential steps in the biosynthesis of coenzyme A. In the first step cysteine is conjugated to 4'-phosphopantothenate to form 4-phosphopantothenoylcysteine. In the second step the latter compound is decarboxylated to form 4'-phosphopantotheine. The sequence is that of Coenzyme A biosynthesis bifunctional protein CoaBC from Methanocaldococcus jannaschii (strain ATCC 43067 / DSM 2661 / JAL-1 / JCM 10045 / NBRC 100440) (Methanococcus jannaschii).